The following is a 146-amino-acid chain: 3-dehydroquinate dehydratase (146 aa).

Tyrosine 22 serves as the catalytic Proton acceptor. The substrate site is built by asparagine 74, histidine 80, and aspartate 87. Histidine 100 acts as the Proton donor in catalysis. Substrate contacts are provided by residues leucine 101–serine 102 and arginine 111.

The protein belongs to the type-II 3-dehydroquinase family. In terms of assembly, homododecamer.

It catalyses the reaction 3-dehydroquinate = 3-dehydroshikimate + H2O. It functions in the pathway metabolic intermediate biosynthesis; chorismate biosynthesis; chorismate from D-erythrose 4-phosphate and phosphoenolpyruvate: step 3/7. Functionally, catalyzes a trans-dehydration via an enolate intermediate. This chain is 3-dehydroquinate dehydratase, found in Clostridium perfringens (strain SM101 / Type A).